The chain runs to 142 residues: Hemoglobin subunit alpha (142 aa).

The Globin domain maps to 2–142 (VLSAADKGHV…VSTVLTSKYR (141 aa)). Residue serine 4 is modified to Phosphoserine. Lysine 8 and lysine 12 each carry N6-succinyllysine. Lysine 17 carries the post-translational modification N6-acetyllysine; alternate. Lysine 17 carries the post-translational modification N6-succinyllysine; alternate. Tyrosine 25 is subject to Phosphotyrosine. Serine 36 carries the phosphoserine modification. At lysine 41 the chain carries N6-succinyllysine. Serine 50 is modified (phosphoserine). An O2-binding site is contributed by histidine 59. Histidine 88 is a heme b binding site. Residue serine 103 is modified to Phosphoserine. The residue at position 109 (threonine 109) is a Phosphothreonine. Residue serine 125 is modified to Phosphoserine. 2 positions are modified to phosphothreonine: threonine 135 and threonine 138. Serine 139 is subject to Phosphoserine.

Belongs to the globin family. As to quaternary structure, heterotetramer of two alpha chains and two beta chains. Red blood cells.

Functionally, involved in oxygen transport from the lung to the various peripheral tissues. Its function is as follows. Hemopressin acts as an antagonist peptide of the cannabinoid receptor CNR1. Hemopressin-binding efficiently blocks cannabinoid receptor CNR1 and subsequent signaling. The sequence is that of Hemoglobin subunit alpha (HBA) from Notamacropus eugenii (Tammar wallaby).